Reading from the N-terminus, the 565-residue chain is Granule-bound starch synthase 1b, chloroplastic/amyloplastic (565 aa).

The N-terminal 34 residues, 1–34 (VFLSMRNKTQLAKRRATNYETHRNSSRTSSPIVC), are a transit peptide targeting the chloroplast. Lys52 contributes to the ADP-alpha-D-glucose binding site.

It belongs to the glycosyltransferase 1 family. Bacterial/plant glycogen synthase subfamily.

It is found in the plastid. Its subcellular location is the chloroplast. The protein resides in the amyloplast. It catalyses the reaction an NDP-alpha-D-glucose + [(1-&gt;4)-alpha-D-glucosyl](n) = [(1-&gt;4)-alpha-D-glucosyl](n+1) + a ribonucleoside 5'-diphosphate + H(+). The protein operates within glycan biosynthesis; starch biosynthesis. In terms of biological role, involved in the synthesis of amylose in endosperm. The protein is Granule-bound starch synthase 1b, chloroplastic/amyloplastic of Hordeum vulgare (Barley).